A 595-amino-acid chain; its full sequence is Glycine betaine transporter BetP (595 aa).

At 1–59 (MTTSDPNPKPIVEDAQPEQITATEELAGLLENPTNLEGKLADAEEEIILEGEDTQASLN) the chain is on the cytoplasmic side. Residues 60–80 (WSVIVPALVIVLATVVWGIGF) traverse the membrane as a helical segment. At 81-98 (KDSFTNFASSALSAVVDN) the chain is on the periplasmic side. Residues 99-119 (LGWAFILFGTVFVFFIVVIAA) traverse the membrane as a helical segment. Topologically, residues 120–137 (SKFGTIRLGRIDEAPEFR) are cytoplasmic. A helical membrane pass occupies residues 138–158 (TVSWISMMFAAGMGIGLMFYG). Na(+) is bound by residues A147, A148, and M150. A glycine betaine-binding site is contributed by 152–153 (IG). Over 159–185 (TTEPLTFYRNGVPGHDEHNVGVAMSTT) the chain is Periplasmic. The helical transmembrane segment at 186–206 (MFHWTLHPWAIYAIVGLAIAY) threads the bilayer. Residues 207-236 (STFRVGRKQLLSSAFVPLIGEKGAEGWLGK) lie on the Cytoplasmic side of the membrane. The helical transmembrane segment at 237 to 257 (LIDILAIIATVFGTACSLGLG) threads the bilayer. Position 253 (S253) interacts with glycine betaine. Topologically, residues 258–276 (ALQIGAGLSAANIIEDPSD) are periplasmic. A helical transmembrane segment spans residues 277 to 296 (WTIVGIVSVLTLAFIFSAIS). Over 297-299 (GVG) the chain is Cytoplasmic. A helical membrane pass occupies residues 300 to 323 (KGIQYLSNANMVLAALLAIFVFVV). The Na(+) site is built by S306 and M310. The Periplasmic portion of the chain corresponds to 324–365 (GPTVSILNLLPGSIGNYLSNFFQMAGRTAMSADGTAGEWLGS). A helical transmembrane segment spans residues 366-386 (WTIFYWAWWISWSPFVGMFLA). Residue 373–377 (WWISW) coordinates glycine betaine. The Cytoplasmic portion of the chain corresponds to 387-396 (RISRGRSIRE). A helical transmembrane segment spans residues 397–417 (FILGVLLVPAGVSTVWFSIFG). The Periplasmic segment spans residues 418–451 (GTAIVFEQNGESIWGDGAAEEQLFGLLHALPGGQ). Residues 452–476 (IMGIIAMILLGTFFITSADSASTVM) traverse the membrane as a helical segment. Topologically, residues 477–489 (GTMSQHGQLEANK) are cytoplasmic. The chain crosses the membrane as a helical span at residues 490-510 (WVTAAWGVATAAIGLTLLLSG). Over 511-520 (GDNALSNLQN) the chain is Periplasmic. Residues 521–541 (VTIVAATPFLFVVIGLMFALV) traverse the membrane as a helical segment. Over 542–595 (KDLSNDVIYLEYREQQRFNARLARERRVHNEHRKRELAAKRRRERKASGAGKRR) the chain is Cytoplasmic. Residues 570-595 (HNEHRKRELAAKRRRERKASGAGKRR) form a disordered region. Residues 581–595 (KRRRERKASGAGKRR) show a composition bias toward basic residues.

The protein belongs to the BCCT transporter (TC 2.A.15) family. In terms of assembly, homotrimer. The monomer can accumulate glycine betaine, but trimerization is required to properly respond to osmotic stress.

Its subcellular location is the cell inner membrane. Its activity is regulated as follows. Uptake is activated by hyperosmotic stress. Osmoresponsive activation is triggered by a change in the internal K(+) concentration. In addition, shows a pronounced chill stimulation, at temperatures around 10 degrees Celsius. Chill activation may be influenced by the membrane lipid composition. Uptake is completely abolished by the uncoupler CCCP, and to a different extent by the ionophores valinomycin and nigericin. Its function is as follows. Involved in response to osmotic stress. High-affinity glycine betaine-specific uptake system, which couples the uptake of glycine betaine to the symport of two Na(+) ions. Transport is driven both by the Na(+) gradient and by the electrical potential. In addition, functions both as an osmosensor and as an osmoregulator that transduces signal to the catalytic part of the carrier protein, which adapts its activity to the extent of osmotic stress. The polypeptide is Glycine betaine transporter BetP (Corynebacterium glutamicum (strain ATCC 13032 / DSM 20300 / JCM 1318 / BCRC 11384 / CCUG 27702 / LMG 3730 / NBRC 12168 / NCIMB 10025 / NRRL B-2784 / 534)).